We begin with the raw amino-acid sequence, 326 residues long: MYGIEYTTVLTFLISVILLNYILKSLTRIMDFIIYRFLFVIVILSPFLNAQNYGINLPITGSMDTPYINSTQEEMFLTSTLCLYYPTEADTEISDNSWKDTLSQLFLTKGWPTGSVYFKDYTDIASFSVDPQLYCDYNLVMMKYDAALQLDMSELADLILNEWLCNPMDITLYYYQQTDEANKWISMGSSCTIKVCPLNTQTLGIGCLTTDTNTFEEVATAEKLAITDVVDGVNHKLSVTTNTCTIRNCKKLGPRENVAVIQVGGSDILDITADPTTAPQTERMMRVNWKKWWQVFYTIVDYVNQIVQVMSKRSRSLNSAAFYYRV.

The first 50 residues, 1 to 50 (MYGIEYTTVLTFLISVILLNYILKSLTRIMDFIIYRFLFVIVILSPFLNA), serve as a signal peptide directing secretion. N-linked (GlcNAc...) asparagine; by host glycosylation is present at Asn69. Disulfide bonds link Cys82/Cys135, Cys165/Cys249, Cys191/Cys244, and Cys196/Cys207. Asp95 contributes to the Ca(2+) binding site. The segment at 165-167 (CNP) is CNP motif; interaction with ITGAV/ITGB3. Ca(2+) contacts are provided by Gln177, Gly206, Thr214, Glu216, Asp228, Val229, and Asp231. The segment at 253–255 (GPR) is GPR motif; interaction with ITGAX/ITGB2. Asp301 contributes to the Ca(2+) binding site.

Belongs to the rotavirus VP7 family. As to quaternary structure, homotrimer; disulfide-linked. 2 Ca(2+) ions bound at each subunit interface in the trimer hold the trimer together. Interacts with the intermediate capsid protein VP6. Interacts with the outer capsid protein VP5*. Post-translationally, N-glycosylated. In terms of processing, the N-terminus is blocked possibly by pyroglutamic acid.

The protein localises to the virion. The protein resides in the host endoplasmic reticulum lumen. Calcium-binding protein that interacts with rotavirus cell receptors once the initial attachment by VP4 has been achieved. Rotavirus attachment and entry into the host cell probably involves multiple sequential contacts between the outer capsid proteins VP4 and VP7, and the cell receptors. Following entry into the host cell, low intracellular or intravesicular Ca(2+) concentration probably causes the calcium-stabilized VP7 trimers to dissociate from the virion. This step is probably necessary for the membrane-disrupting entry step and the release of VP4, which is locked onto the virion by VP7. The protein is Outer capsid glycoprotein VP7 of Sus scrofa (Pig).